The primary structure comprises 358 residues: Naringenin,2-oxoglutarate 3-dioxygenase (358 aa).

The Fe2OG dioxygenase domain occupies 190–294; sequence CVDMDQKIVV…RLSIATFQNP (105 aa). Fe cation-binding residues include His217, Asp219, and His275. Arg285 contacts 2-oxoglutarate.

The protein belongs to the iron/ascorbate-dependent oxidoreductase family. As to quaternary structure, interacts with Dihydroflavonol-4-reductase (TT3), chalcone synthase (TT4) and chalcone isomerase (TT5) to form a flavonoid enzyme complex. It depends on Fe(2+) as a cofactor. L-ascorbate is required as a cofactor.

It carries out the reaction a (2S)-flavan-4-one + 2-oxoglutarate + O2 = a (2R,3R)-dihydroflavonol + succinate + CO2. The protein operates within secondary metabolite biosynthesis; flavonoid biosynthesis. In terms of biological role, catalyzes the 3-beta-hydroxylation of 2S-flavanones to 2R,3R-dihydroflavonols which are intermediates in the biosynthesis of flavonols, anthocyanidins, catechins and proanthocyanidins in plants. This chain is Naringenin,2-oxoglutarate 3-dioxygenase (F3H), found in Arabidopsis thaliana (Mouse-ear cress).